A 252-amino-acid chain; its full sequence is C-X-C motif chemokine 16 (252 aa).

The N-terminal stretch at 1–25 is a signal peptide; that stretch reads MMLGRTSRLLLVLLFIAYATTSGNG. Over 26 to 198 the chain is Extracellular; that stretch reads NEGSKVGSCP…RGPQAGTSAT (173 aa). Disulfide bonds link Cys34/Cys64 and Cys36/Cys78. Disordered stretches follow at residues 115–145 and 163–195; these read LPEP…QQPT and TTTY…QAGT. Over residues 125–145 the composition is skewed to polar residues; that stretch reads DTATTSQTYLPSTLQRTQQPT. Basic and acidic residues predominate over residues 176–189; sequence PEAKENQKQLKENR. The chain crosses the membrane as a helical span at residues 199–219; that stretch reads VPVLSLLAIVFILAGVLLYVV. The Cytoplasmic segment spans residues 220-252; that stretch reads CKRRKNQLLQHPPDLAASLYTCSRRTRAENGTL.

Belongs to the intercrine alpha (chemokine CxC) family. Glycosylated.

It localises to the membrane. Functionally, induces a strong chemotactic response. Induces calcium mobilization. Binds to CXCR6/Bonzo. Also acts as a scavenger receptor on macrophages, which specifically binds to OxLDL (oxidized low density lipoprotein), suggesting that it may be involved in pathophysiology such as atherogenesis. This is C-X-C motif chemokine 16 (CXCL16) from Bos taurus (Bovine).